The sequence spans 533 residues: MRLAFWLYEGTALHGISRVTNSMKDVHTVYHAPQGDDYITATYTMLERTPQFPGLSISVVRGQDLARGESRLPATLQQVEEHYNPRMIVVAPSCSTALLQEDLEQLSRHSGVDPDKILVYDVNPFRVQEHEAAEGLFTELVKRSAQPQTLTEQPSVNLLGFTSLGFHLRSDLTSLRRILKTLGITINVVAPWGASMDDLSRLPSAWVNVVPYHEMGNGAARYLREKFGMPILSGAPMGVNPTLKWIEDLLAQINDIARERGLPLLDMPDLTEFSLDGLSAPSGVPWFARTADMESFSGKRAFVFGDATHTVGMVKFLKDELGMQIIGAGTYLSRHADWVRSELEGYLPEPLIVTDKFQEISKKIEDEMPELVCGTQMERHSCRKLDVPCMVISTPTHIEDHLIAYYPILGFEGADILADRVYTSCKLGLEKHLIDFFGDAGLEYEDDEEAVGLSTNGHAAAETETSIAGEAATVVSAEGDGMPWTDDAEKMLKKVPFFVRKKVRKNTENYAREIGETTISGDVFRKAKEALGG.

Asp-36 is a binding site for [4Fe-4S] cluster. Asp-292 (proton donor) is an active-site residue. Residue 428-429 (GL) participates in substrate binding.

This sequence belongs to the ChlB/BchB/BchZ family. As to quaternary structure, protochlorophyllide reductase is composed of three subunits; BchL, BchN and BchB. Forms a heterotetramer of two BchB and two BchN subunits. [4Fe-4S] cluster is required as a cofactor.

It carries out the reaction chlorophyllide a + oxidized 2[4Fe-4S]-[ferredoxin] + 2 ADP + 2 phosphate = protochlorophyllide a + reduced 2[4Fe-4S]-[ferredoxin] + 2 ATP + 2 H2O. It participates in porphyrin-containing compound metabolism; bacteriochlorophyll biosynthesis (light-independent). Functionally, component of the dark-operative protochlorophyllide reductase (DPOR) that uses Mg-ATP and reduced ferredoxin to reduce ring D of protochlorophyllide (Pchlide) to form chlorophyllide a (Chlide). This reaction is light-independent. The NB-protein (BchN-BchB) is the catalytic component of the complex. This Prosthecochloris aestuarii (strain DSM 271 / SK 413) protein is Light-independent protochlorophyllide reductase subunit B.